Here is a 179-residue protein sequence, read N- to C-terminus: Interleukin-22 (179 aa).

Residues 1–33 (MAALQKSVSSFLMGTLATSCLLLLALLVQGGAA) form the signal peptide. 2 disulfides stabilise this stretch: C40/C132 and C89/C178. Residues N54, N68, and N97 are each glycosylated (N-linked (GlcNAc...) asparagine).

Belongs to the IL-10 family.

Its subcellular location is the secreted. In terms of biological role, cytokine that plays a critical role in modulating tissue responses during inflammation. Plays an essential role in the regeneration of epithelial cells to maintain barrier function after injury and for the prevention of further tissue damage. Unlike most of the cytokines, has no effect on immune cells. Signals through a heterodimeric receptor composed of two subunits, the specific receptor IL22RA1 which is present on non-immune cells in many organs and the shared subunit IL10RB. Ligation of IL22RA1 with IL22 induces activation of the tyrosine kinases JAK1 and TYK2, which in turn activates STAT3. In turn, promotes cell survival and proliferation through STAT3, ERK1/2 and PI3K/AKT pathways. Promotes phosphorylation of GSK3B at 'Ser-9' and CTTN. Promotes epithelial cell spreading. In Homo sapiens (Human), this protein is Interleukin-22 (IL22).